The sequence spans 223 residues: Ribonuclease HII (223 aa).

The RNase H type-2 domain maps to 32-223 (LYIAGVDEVG…LKKRYRDYMS (192 aa)). A divalent metal cation-binding residues include Asp-38, Glu-39, and Asp-130.

The protein belongs to the RNase HII family. Mn(2+) serves as cofactor. Requires Mg(2+) as cofactor.

Its subcellular location is the cytoplasm. It catalyses the reaction Endonucleolytic cleavage to 5'-phosphomonoester.. Endonuclease that specifically degrades the RNA of RNA-DNA hybrids. This is Ribonuclease HII from Bartonella henselae (strain ATCC 49882 / DSM 28221 / CCUG 30454 / Houston 1) (Rochalimaea henselae).